Reading from the N-terminus, the 202-residue chain is Casparian strip membrane protein 1 (202 aa).

Residues 1–13 are compositionally biased toward polar residues; that stretch reads MEKSESSTIQIAE. The interval 1–30 is disordered; that stretch reads MEKSESSTIQIAESSKDRKGKAPLLPPPVH. Residues 1–42 are Cytoplasmic-facing; sequence MEKSESSTIQIAESSKDRKGKAPLLPPPVHHERAAGYKRGVA. Residues 43-63 form a helical membrane-spanning segment; it reads IFDLILRISAATAALAATIVM. Residues 64 to 90 lie on the Extracellular side of the membrane; it reads GTTEQTLPFFTQFFQFRASYDDLPTFT. Residues 91 to 111 form a helical membrane-spanning segment; sequence FFVIAMAIVTGYLILSVPFSI. Residues 112 to 130 are Cytoplasmic-facing; that stretch reads VCIARPVVAAPRILLILCD. A helical membrane pass occupies residues 131 to 151; sequence TLTVTLATSAAGASAAIVYLA. Residues 152–177 are Extracellular-facing; sequence HNGXSDANWLAICQQFNDFCQRVSGA. The chain crosses the membrane as a helical span at residues 178–198; it reads VVAAFVSAVLLIFLVVLSAIV. Topologically, residues 199–202 are cytoplasmic; it reads LKKH.

It belongs to the Casparian strip membrane proteins (CASP) family. In terms of assembly, homodimer and heterodimers.

It localises to the cell membrane. Regulates membrane-cell wall junctions and localized cell wall deposition. Required for establishment of the Casparian strip membrane domain (CSD) and the subsequent formation of Casparian strips, a cell wall modification of the root endodermis that determines an apoplastic barrier between the intraorganismal apoplasm and the extraorganismal apoplasm and prevents lateral diffusion. This chain is Casparian strip membrane protein 1, found in Triphysaria pusilla (Dwarf owl's-clover).